Reading from the N-terminus, the 306-residue chain is Phosphatidylserine decarboxylase proenzyme (306 aa).

Residues aspartate 98, histidine 155, and serine 259 each act as charge relay system; for autoendoproteolytic cleavage activity in the active site. Residue serine 259 is the Schiff-base intermediate with substrate; via pyruvic acid; for decarboxylase activity of the active site. Residue serine 259 is modified to Pyruvic acid (Ser); by autocatalysis.

The protein belongs to the phosphatidylserine decarboxylase family. PSD-B subfamily. Prokaryotic type I sub-subfamily. In terms of assembly, heterodimer of a large membrane-associated beta subunit and a small pyruvoyl-containing alpha subunit. Pyruvate serves as cofactor. Is synthesized initially as an inactive proenzyme. Formation of the active enzyme involves a self-maturation process in which the active site pyruvoyl group is generated from an internal serine residue via an autocatalytic post-translational modification. Two non-identical subunits are generated from the proenzyme in this reaction, and the pyruvate is formed at the N-terminus of the alpha chain, which is derived from the carboxyl end of the proenzyme. The autoendoproteolytic cleavage occurs by a canonical serine protease mechanism, in which the side chain hydroxyl group of the serine supplies its oxygen atom to form the C-terminus of the beta chain, while the remainder of the serine residue undergoes an oxidative deamination to produce ammonia and the pyruvoyl prosthetic group on the alpha chain. During this reaction, the Ser that is part of the protease active site of the proenzyme becomes the pyruvoyl prosthetic group, which constitutes an essential element of the active site of the mature decarboxylase.

The protein localises to the cell membrane. It catalyses the reaction a 1,2-diacyl-sn-glycero-3-phospho-L-serine + H(+) = a 1,2-diacyl-sn-glycero-3-phosphoethanolamine + CO2. The protein operates within phospholipid metabolism; phosphatidylethanolamine biosynthesis; phosphatidylethanolamine from CDP-diacylglycerol: step 2/2. Its function is as follows. Catalyzes the formation of phosphatidylethanolamine (PtdEtn) from phosphatidylserine (PtdSer). The protein is Phosphatidylserine decarboxylase proenzyme of Nitrosococcus oceani (strain ATCC 19707 / BCRC 17464 / JCM 30415 / NCIMB 11848 / C-107).